The chain runs to 596 residues: Merlin (596 aa).

A Phosphoserine modification is found at S13. The FERM domain occupies 22 to 311; it reads FTVRIVTMDA…GNHDLFMRRR (290 aa). The residue at position 518 (S518) is a Phosphoserine; by PAK. The interval 560 to 580 is disordered; sequence VLHSESSDRGGPSSKHNTIKK.

As to quaternary structure, interacts with NHERF1, HGS and AGAP2. Interacts with SGSM3. Interacts (via FERM domain) with MPP1. Interacts with LAYN. Interacts with WWC1. Interacts with the CUL4A-RBX1-DDB1-VprBP/DCAF1 E3 ubiquitin-protein ligase complex. The unphosphorylated form interacts (via FERM domain) with VPRBP/DCAF1. Interacts (via FERM domain) with NOP53; the interaction is direct. Interacts with SCHIP1; the interaction is direct. Post-translationally, phosphorylation of Ser-518 inhibits nuclear localization by disrupting the intramolecular association of the FERM domain with the C-terminal tail. The dephosphorylation of Ser-518 favors the interaction with NOP53. In terms of processing, ubiquitinated by the CUL4A-RBX1-DDB1-DCAF1/VprBP E3 ubiquitin-protein ligase complex for ubiquitination and subsequent proteasome-dependent degradation.

The protein resides in the cell membrane. The protein localises to the cell projection. It localises to the cytoplasm. Its subcellular location is the cytoskeleton. It is found in the nucleus. Its function is as follows. Probable regulator of the Hippo/SWH (Sav/Wts/Hpo) signaling pathway, a signaling pathway that plays a pivotal role in tumor suppression by restricting proliferation and promoting apoptosis. Along with WWC1 can synergistically induce the phosphorylation of LATS1 and LATS2 and can probably function in the regulation of the Hippo/SWH (Sav/Wts/Hpo) signaling pathway. May act as a membrane stabilizing protein. May inhibit PI3 kinase by binding to AGAP2 and impairing its stimulating activity. Suppresses cell proliferation and tumorigenesis by inhibiting the CUL4A-RBX1-DDB1-VprBP/DCAF1 E3 ubiquitin-protein ligase complex. Plays a role in lens development and is required for complete fiber cell terminal differentiation, maintenance of cell polarity and separation of the lens vesicle from the corneal epithelium. In Mus musculus (Mouse), this protein is Merlin (Nf2).